The chain runs to 323 residues: Formimidoylglutamase (323 aa).

Histidine 131, aspartate 157, histidine 159, aspartate 161, cysteine 245, and aspartate 247 together coordinate Mn(2+).

The protein belongs to the arginase family. Mn(2+) serves as cofactor.

The enzyme catalyses N-formimidoyl-L-glutamate + H2O = formamide + L-glutamate. It functions in the pathway amino-acid degradation; L-histidine degradation into L-glutamate; L-glutamate from N-formimidoyl-L-glutamate (hydrolase route): step 1/1. Its function is as follows. Catalyzes the conversion of N-formimidoyl-L-glutamate to L-glutamate and formamide. This is Formimidoylglutamase from Geobacillus kaustophilus (strain HTA426).